A 343-amino-acid polypeptide reads, in one-letter code: MKVLGIETSCDETGVAIYDGSVRRLLGHCLHSQIDLHAAYGGVVPELASRDHIRRLPLLLKQLFGETGLSRRDIDAVAYTAGPGLAGALLTGASFAEAFALAAGVPALPIHHLEGHLLSPLLADDAPRFPFVALLVSGGHTQLMHVAGVGRYELLGESLDDAAGEAFDKTAKLLGLGYPGGPQLSALAAQGCAGRFKLPRPMLHSGDFDFSFSGLKTAVLNRVSSDDWEPGLAADLAADFQEAVVEVLCAKALAALKHTGLDTLVVAGGVGANRRLRERLDNLAARRRYRVCYPEPALCTDNGAMIAFAGALRLEAGERRAAAPAVRVRPRWPLVELDAPGCP.

2 residues coordinate Fe cation: H112 and H116. Substrate is bound by residues L135–G139, D168, G181, and N273. D301 serves as a coordination point for Fe cation.

It belongs to the KAE1 / TsaD family. Requires Fe(2+) as cofactor.

It localises to the cytoplasm. It catalyses the reaction L-threonylcarbamoyladenylate + adenosine(37) in tRNA = N(6)-L-threonylcarbamoyladenosine(37) in tRNA + AMP + H(+). In terms of biological role, required for the formation of a threonylcarbamoyl group on adenosine at position 37 (t(6)A37) in tRNAs that read codons beginning with adenine. Is involved in the transfer of the threonylcarbamoyl moiety of threonylcarbamoyl-AMP (TC-AMP) to the N6 group of A37, together with TsaE and TsaB. TsaD likely plays a direct catalytic role in this reaction. This is tRNA N6-adenosine threonylcarbamoyltransferase from Azoarcus sp. (strain BH72).